Consider the following 612-residue polypeptide: Glutamine--fructose-6-phosphate aminotransferase [isomerizing] (612 aa).

Cysteine 2 serves as the catalytic Nucleophile; for GATase activity. A Glutamine amidotransferase type-2 domain is found at 2-220; sequence CGIVGAIRAH…DGDIALLASD (219 aa). SIS domains are found at residues 288-428 and 461-602; these read AKSV…VRGL and WAQQ…VDKP. The active-site For Fru-6P isomerization activity is the lysine 607.

As to quaternary structure, homodimer.

The protein resides in the cytoplasm. It catalyses the reaction D-fructose 6-phosphate + L-glutamine = D-glucosamine 6-phosphate + L-glutamate. In terms of biological role, catalyzes the first step in hexosamine metabolism, converting fructose-6P into glucosamine-6P using glutamine as a nitrogen source. The polypeptide is Glutamine--fructose-6-phosphate aminotransferase [isomerizing] (Neisseria meningitidis serogroup A / serotype 4A (strain DSM 15465 / Z2491)).